Consider the following 1024-residue polypeptide: Multidrug resistance protein MdtC (1024 aa).

12 consecutive transmembrane segments (helical) span residues 3–23 (FLSL…ALVL), 333–353 (EVEQ…FAFL), 360–380 (LIPA…MYLC), 387–407 (LSLM…IVVL), 431–451 (VGFT…PLLM), 463–483 (FAIT…TLTP), 528–548 (WALL…ISMP), 853–873 (LWLI…LYES), 875–895 (VHPL…LLAL), 897–917 (LFNT…IGIV), 953–973 (PIIM…LSSG), and 984–1004 (ITIV…TPVV).

Belongs to the resistance-nodulation-cell division (RND) (TC 2.A.6) family. MdtC subfamily. As to quaternary structure, part of a tripartite efflux system composed of MdtA, MdtB and MdtC. MdtC forms a heteromultimer with MdtB.

The protein resides in the cell inner membrane. This chain is Multidrug resistance protein MdtC, found in Erwinia amylovora (strain ATCC 49946 / CCPPB 0273 / Ea273 / 27-3).